We begin with the raw amino-acid sequence, 179 residues long: Methylated-DNA--protein-cysteine methyltransferase (179 aa).

Residue Cys130 is the Nucleophile; methyl group acceptor of the active site.

The protein belongs to the MGMT family.

It is found in the cytoplasm. The catalysed reaction is a 6-O-methyl-2'-deoxyguanosine in DNA + L-cysteinyl-[protein] = S-methyl-L-cysteinyl-[protein] + a 2'-deoxyguanosine in DNA. It carries out the reaction a 4-O-methyl-thymidine in DNA + L-cysteinyl-[protein] = a thymidine in DNA + S-methyl-L-cysteinyl-[protein]. Involved in the cellular defense against the biological effects of O6-methylguanine (O6-MeG) and O4-methylthymine (O4-MeT) in DNA. Repairs the methylated nucleobase in DNA by stoichiometrically transferring the methyl group to a cysteine residue in the enzyme. This is a suicide reaction: the enzyme is irreversibly inactivated. The polypeptide is Methylated-DNA--protein-cysteine methyltransferase (Haemophilus influenzae (strain ATCC 51907 / DSM 11121 / KW20 / Rd)).